The chain runs to 980 residues: MTTDTRRRVKLYALNAERQWDDRGTGHVSSTYVERLKGISLLVRAESDGSLLLESKIQPDTAYQKQQDTLIVWSEGDNFDLALSFQEKAGCDEIWEKICQVQGKDPSVEITQDIVEESEDERFEDMSDTAPPIELPPCELSRLEDISETIQSCLSTPLRKEKLSMALESESYIKKLLNLFHVCEDLDNTEGLHHLFEIFKNIFLLNKNALFEIMFADDTIFDVVGCLEYDPSVSQPKKHRQYLKQLAKFREAVPIKNLDLLAKIHQTFRVQYIQDIILPTPSVFVEDNMLNTLSSFIFFNKVEIVTMIQDDERYLLDVFAVLTDPTTGDAKRRDTVLFLKEFCNYAQNLQPQGKDSFYKTLTCLGILQALELTLVMNDKKTKSASIDILTAIVEFSPLVVRNYTLNQANRPEVERMLLNIAIEQMLNDSEPELGIAVQLMGIVKILLEPENMLTEKGDFLNFFYKYSVQTLVAPVILNTIGDRPQNEDYQTAQLLGIVLDILSFCVEHHSYHIKNFLLQKDLLKRILVLMKSTHTFLVLGALRLLRKIIALKDEFYNRHIVKCNLFAPVVDAFIRNNGRYNLLESAILELFEFIKLEDIRTLCVYFVENFSKIFDEIEYVQTFKYLKNRYDQYQDRLKDRDKMENRTDGGLPIIRSGGRFRRDQRQMEEEEEMWFNEEDDFTEEIDTYNNVMKSVSEKNGPQTQNQQKSSPPHSTSPHSGLLGSLSTTASSTATSATSGAPVASGSSSPEAISADEQTQAAVHLAAAALQHHQQQQQQQQQNPFQQQTQPEIAELQQQLSSVEAPQSQELELSQSAAASASPTSSSSSLEASTSSSSASSSSSSSSSSSPPGSSAAASLCDSATVAAVAASQFLSTIATAMAASVTAAAATNSSPSISPAPAVSSPDIENADAQLPPSDDASSPASGEQDANSTEGTSSEADKTTAKKGLVDYESDSGEDDYEEDEYSEGPQAQKRARQA.

The region spanning 1–105 (MTTDTRRRVK…EKICQVQGKD (105 aa)) is the WH1 domain. Disordered regions lie at residues 640-668 (RDKM…RQME), 695-861 (VSEK…SLCD), and 885-980 (VTAA…ARQA). Over residues 695-708 (VSEKNGPQTQNQQK) the composition is skewed to polar residues. 4 stretches are compositionally biased toward low complexity: residues 709–749 (SSPP…SSSP), 757–789 (QTQA…QQTQ), 803–859 (EAPQ…AASL), and 885–926 (VTAA…SPAS). Over residues 929–939 (QDANSTEGTSS) the composition is skewed to polar residues. The segment covering 940-951 (EADKTTAKKGLV) has biased composition (basic and acidic residues). The segment covering 953–968 (YESDSGEDDYEEDEYS) has biased composition (acidic residues).

Belongs to the SMEK family. In terms of assembly, serine/threonine-protein phosphatase 4 (PP4) occurs in different assemblies of the catalytic and one or more regulatory subunits. Probably part of a PP4 PPP4C-PPP4R2-PPP4R3 complex containing Pp4-19C, PPP4R2r and flfl. Interacts with mira. Expressed in neuroblasts.

It localises to the nucleus. The protein resides in the membrane. The protein localises to the cytoplasm. Regulatory subunit of serine/threonine-protein phosphatase 4. The probable PP4 complex Pp4-19C-PPP4R2r-flfl (PPP4C-PPP4R2-PPP4R3) is required to prevent caspase induced cell death (in vitro). May be involved in DNA damage repair. Key mediator specific for the localization of mira and associated cell fate determinants during both interphase and mitosis. Nuclear Flfl is required to exclude mira/pros from the nucleus when inefficiently bound to the cytoskeleton/cortex, whereas cytosolic or membrane-associated flfl is required for the cortical association and asymmetric localization of mira/pros/brat/stau at metaphase and anaphase. This chain is Serine/threonine-protein phosphatase 4 regulatory subunit 3 (flfl), found in Drosophila melanogaster (Fruit fly).